The chain runs to 375 residues: Succinyl-diaminopimelate desuccinylase (375 aa).

Residue H66 coordinates Zn(2+). D68 is a catalytic residue. D99 lines the Zn(2+) pocket. E133 acts as the Proton acceptor in catalysis. Zn(2+) contacts are provided by E134, E162, and H348.

Belongs to the peptidase M20A family. DapE subfamily. Homodimer. Zn(2+) serves as cofactor. Requires Co(2+) as cofactor.

It catalyses the reaction N-succinyl-(2S,6S)-2,6-diaminopimelate + H2O = (2S,6S)-2,6-diaminopimelate + succinate. It participates in amino-acid biosynthesis; L-lysine biosynthesis via DAP pathway; LL-2,6-diaminopimelate from (S)-tetrahydrodipicolinate (succinylase route): step 3/3. Its function is as follows. Catalyzes the hydrolysis of N-succinyl-L,L-diaminopimelic acid (SDAP), forming succinate and LL-2,6-diaminopimelate (DAP), an intermediate involved in the bacterial biosynthesis of lysine and meso-diaminopimelic acid, an essential component of bacterial cell walls. The chain is Succinyl-diaminopimelate desuccinylase from Escherichia coli O6:K15:H31 (strain 536 / UPEC).